Consider the following 2321-residue polypeptide: Major viral transcription factor ICP4 homolog (2321 aa).

Disordered stretches follow at residues 19–183 (GIFP…SPPL), 296–329 (ILHT…PAPI), 350–438 (EFIQ…PSLG), 954–1180 (MDDD…SGLA), 1360–1392 (DNSS…APPH), 1597–1841 (LLND…PSCY), and 2277–2321 (QHEE…TFTD). A compositionally biased stretch (low complexity) spans 114 to 147 (SSNRPGGRNSSNGADESGESSSDRSPSYSPCDSY). Pro residues-rich tracts occupy residues 302 to 329 (PTPP…PAPI) and 355 to 367 (QSPP…PSPP). A compositionally biased stretch (low complexity) spans 368 to 389 (AHSSSSCSPSHLAPSPLSSSPL). Residues 390–410 (SSPPQLSPAPVSPPSSPPPLS) are compositionally biased toward pro residues. Polar residues-rich tracts occupy residues 424–433 (SISSQPQSCP) and 1002–1011 (PRLTTPSSGR). Residues 1031–1093 (PETSPSNEHI…PSSPSSSRSP (63 aa)) are compositionally biased toward low complexity. Residues 1151–1161 (GGGRPRGRPPK) are compositionally biased toward basic residues. 2 stretches are compositionally biased toward polar residues: residues 1169-1180 (NDIQVTSSSGLA) and 1371-1389 (SKPS…QTTA). Over residues 1630-1644 (STSSSQSASDKSPIK) the composition is skewed to low complexity. 2 stretches are compositionally biased toward polar residues: residues 1720–1743 (KAQT…QSSS) and 1801–1816 (VGQT…HDIL). Residues 1817-1839 (SSSLPNRSCSSSPSPSKRPYHPS) are compositionally biased toward low complexity.

The protein belongs to the herpesviridae ICP4 family. A long stretch of serine residues may be a major site of phosphorylation.

The protein localises to the host nucleus. Functionally, this IE protein is a multifunctional protein capable of migrating to the nucleus, binding to DNA, trans-activating other viral genes, and autoregulating its own synthesis. It is required for the switch from immediate-early to early mode of gene expression. The sequence is that of Major viral transcription factor ICP4 homolog (MDV084) from Gallus gallus (Chicken).